A 218-amino-acid polypeptide reads, in one-letter code: Pyridoxine/pyridoxamine 5'-phosphate oxidase (218 aa).

Substrate is bound by residues 12-15 (RLAY) and R70. Residues 65–70 (RTVLLR), 80–81 (YT), K87, and Q109 each bind FMN. Substrate-binding residues include Y127, R131, and S135. FMN contacts are provided by residues 145-146 (QS) and W191. Position 197–199 (197–199 (RLH)) interacts with substrate. Position 201 (R201) interacts with FMN.

It belongs to the pyridoxamine 5'-phosphate oxidase family. In terms of assembly, homodimer. FMN serves as cofactor.

The enzyme catalyses pyridoxamine 5'-phosphate + O2 + H2O = pyridoxal 5'-phosphate + H2O2 + NH4(+). It catalyses the reaction pyridoxine 5'-phosphate + O2 = pyridoxal 5'-phosphate + H2O2. Its pathway is cofactor metabolism; pyridoxal 5'-phosphate salvage; pyridoxal 5'-phosphate from pyridoxamine 5'-phosphate: step 1/1. It participates in cofactor metabolism; pyridoxal 5'-phosphate salvage; pyridoxal 5'-phosphate from pyridoxine 5'-phosphate: step 1/1. Functionally, catalyzes the oxidation of either pyridoxine 5'-phosphate (PNP) or pyridoxamine 5'-phosphate (PMP) into pyridoxal 5'-phosphate (PLP). The sequence is that of Pyridoxine/pyridoxamine 5'-phosphate oxidase from Deinococcus geothermalis (strain DSM 11300 / CIP 105573 / AG-3a).